Consider the following 273-residue polypeptide: 2,3,4,5-tetrahydropyridine-2,6-dicarboxylate N-succinyltransferase (273 aa).

Substrate-binding residues include Arg105 and Asp142.

This sequence belongs to the transferase hexapeptide repeat family. In terms of assembly, homotrimer.

It localises to the cytoplasm. The enzyme catalyses (S)-2,3,4,5-tetrahydrodipicolinate + succinyl-CoA + H2O = (S)-2-succinylamino-6-oxoheptanedioate + CoA. The protein operates within amino-acid biosynthesis; L-lysine biosynthesis via DAP pathway; LL-2,6-diaminopimelate from (S)-tetrahydrodipicolinate (succinylase route): step 1/3. This is 2,3,4,5-tetrahydropyridine-2,6-dicarboxylate N-succinyltransferase from Bordetella bronchiseptica (strain ATCC BAA-588 / NCTC 13252 / RB50) (Alcaligenes bronchisepticus).